A 328-amino-acid polypeptide reads, in one-letter code: Peroxidase 71 (328 aa).

The first 23 residues, 1–23, serve as a signal peptide directing secretion; that stretch reads MGLVRSLCLLITFLNCLIISVHG. 4 disulfide bridges follow: Cys-44/Cys-120, Cys-77/Cys-82, Cys-126/Cys-324, and Cys-204/Cys-235. The Proton acceptor role is filled by His-75. The Ca(2+) site is built by Asp-76, Val-79, Gly-81, Asp-83, and Ser-85. Position 167 (Pro-167) interacts with substrate. His-197 contributes to the heme b binding site. Thr-198 is a binding site for Ca(2+). N-linked (GlcNAc...) asparagine glycosylation is present at Asn-213. Ca(2+) is bound by residues Asp-248, Ser-251, and Asp-256. A glycan (N-linked (GlcNAc...) asparagine) is linked at Asn-262.

It belongs to the peroxidase family. Classical plant (class III) peroxidase subfamily. It depends on heme b as a cofactor. Requires Ca(2+) as cofactor. As to expression, slightly expressed in roots.

Its subcellular location is the secreted. It carries out the reaction 2 a phenolic donor + H2O2 = 2 a phenolic radical donor + 2 H2O. Its function is as follows. Removal of H(2)O(2), oxidation of toxic reductants, biosynthesis and degradation of lignin, suberization, auxin catabolism, response to environmental stresses such as wounding, pathogen attack and oxidative stress. These functions might be dependent on each isozyme/isoform in each plant tissue. The protein is Peroxidase 71 (PER71) of Arabidopsis thaliana (Mouse-ear cress).